Consider the following 251-residue polypeptide: Aquaporin TIP1-1 (251 aa).

Met1 carries the N-acetylmethionine modification. Residues 1–23 are Cytoplasmic-facing; it reads MPIRNIAIGRPDEATRPDALKAA. The chain crosses the membrane as a helical span at residues 24–44; it reads LAEFISTLIFVVAGSGSGMAF. Topologically, residues 45 to 56 are vacuolar; the sequence is NKLTENGATTPS. Residues 57-77 traverse the membrane as a helical segment; the sequence is GLVAAAVAHAFGLFVAVSVGA. Residues 78-103 are Cytoplasmic-facing; that stretch reads NISGGHVNPAVTFGAFIGGNITLLRG. The short motif at 85–87 is the NPA 1 element; it reads NPA. A helical transmembrane segment spans residues 104 to 124; that stretch reads ILYWIAQLLGSVVACLILKFA. Residues 125-143 are Vacuolar-facing; it reads TGGLAVPAFGLSAGVGVLN. The chain crosses the membrane as a helical span at residues 144-164; sequence AFVFEIVMTFGLVYTVYATAI. Topologically, residues 165-172 are cytoplasmic; that stretch reads DPKNGSLG. A helical transmembrane segment spans residues 173–193; that stretch reads TIAPIAIGFIVGANILAGGAF. The Vacuolar segment spans residues 194-218; it reads SGASMNPAVAFGPAVVSWTWTNHWV. The NPA 2 signature appears at 199-201; the sequence is NPA. A helical membrane pass occupies residues 219–239; sequence YWAGPLVGGGIAGLIYEVFFI. At 240-251 the chain is on the cytoplasmic side; the sequence is NTTHEQLPTTDY.

Belongs to the MIP/aquaporin (TC 1.A.8) family. TIP (TC 1.A.8.10) subfamily. In terms of assembly, interacts with cucumber mosaic virus (CMV) Protein 1a. As to expression, in all the vegetative organs, but not in seeds. Preferentially expressed in roots.

It localises to the vacuole membrane. Its function is as follows. Water channel required to facilitate the transport of water, diffusion of amino acids and/or peptides from the vacuolar compartment to the cytoplasm. Does not promote glycerol permeability. May play a role in the control of cell turgor and cell expansion. Its function is impaired by Hg(2+). May be involved in a vesicle-based metabolite routing through or between pre-vacuolar compartments and the central vacuole. Transports urea in yeast cells in a pH-independent manner. Transports H(2)O(2) in yeast cells. The chain is Aquaporin TIP1-1 (TIP1-1) from Arabidopsis thaliana (Mouse-ear cress).